A 191-amino-acid polypeptide reads, in one-letter code: Repressor Rok (191 aa).

Positions phenylalanine 2–asparagine 43 form a coiled coil. The segment covering serine 75–proline 96 has biased composition (low complexity). The disordered stretch occupies residues serine 75 to lysine 116. Residues leucine 95–glutamate 191 form a DNA-binding region.

The protein resides in the cytoplasm. It is found in the nucleoid. Repressor of comK, the master regulator of competence development. Overexpression seems to be lethal. Represses at least 20 genes that specify membrane-localized and secreted proteins, including some that encode products with antibiotic activity. Binds to many AT-rich sites in the chromosome, many of which are known or thought to derive from horizontal gene transfer; helps keep mobile element ICEBs1 quiescent in the genome. Binds to its own promoter and is thus probably autoregulatory. This chain is Repressor Rok, found in Bacillus subtilis (strain 168).